Consider the following 211-residue polypeptide: Phosphoheptose isomerase (211 aa).

Residues 50–211 (IAGTFEDGGK…VERMLGYCRL (162 aa)) form the SIS domain. 65–67 (NGG) is a substrate binding site. Residues His74 and Glu78 each coordinate Zn(2+). Substrate is bound by residues Glu78, 109–110 (ND), 135–137 (STS), Ser140, and Gln188. Zn(2+) is bound by residues Gln188 and His196.

It belongs to the SIS family. GmhA subfamily. It depends on Zn(2+) as a cofactor.

It localises to the cytoplasm. It carries out the reaction 2 D-sedoheptulose 7-phosphate = D-glycero-alpha-D-manno-heptose 7-phosphate + D-glycero-beta-D-manno-heptose 7-phosphate. It functions in the pathway carbohydrate biosynthesis; D-glycero-D-manno-heptose 7-phosphate biosynthesis; D-glycero-alpha-D-manno-heptose 7-phosphate and D-glycero-beta-D-manno-heptose 7-phosphate from sedoheptulose 7-phosphate: step 1/1. Catalyzes the isomerization of sedoheptulose 7-phosphate in D-glycero-D-manno-heptose 7-phosphate. This chain is Phosphoheptose isomerase, found in Pelodictyon phaeoclathratiforme (strain DSM 5477 / BU-1).